A 707-amino-acid chain; its full sequence is SPX domain-containing membrane protein At4g11810 (707 aa).

One can recognise an SPX domain in the interval 2 to 145; the sequence is VAFGKKLKER…GYRFTNYYVK (144 aa). A run of 6 helical transmembrane segments spans residues 252–272, 283–303, 320–340, 342–361, 380–400, and 416–436; these read FMSLLLNLANTFLYMVNTYII, LGAAATVCGVVIGAMAVAQLF, LIFSSIVLFFGNLLYALAYDF, SLALLLIGRLFCGFGSARAV, AGFVSASALGMACGPALAGLL, and LPGWVMAVAWLLYLVWLAISF. The span at 481–498 shows a compositional bias: acidic residues; the sequence is EETEHDEEDDGDGSEESS. The disordered stretch occupies residues 481–503; it reads EETEHDEEDDGDGSEESSDDSRK. 5 consecutive transmembrane segments (helical) span residues 523-543, 557-577, 586-606, 614-634, and 679-699; these read LLIYFMLKYAMEILLSESSVV, IFLFCLGLTVLPVNLVVGSYI, ILLASEIMVCIGIVLSFHVVI, VISGFIMFVSAEVLEGVNLSL, and MLLNVTLLPSLIICVLSILAT.

This sequence belongs to the major facilitator superfamily.

The protein localises to the membrane. The polypeptide is SPX domain-containing membrane protein At4g11810 (Arabidopsis thaliana (Mouse-ear cress)).